The following is a 431-amino-acid chain: Forkhead box protein N2 (431 aa).

A DNA-binding region (fork-head) is located at residues Lys-112–Ser-208. The disordered stretch occupies residues Asp-364 to Lys-387.

The protein localises to the nucleus. Functionally, binds to the purine-rich region in HTLV-I LTR. This is Forkhead box protein N2 (FOXN2) from Homo sapiens (Human).